A 311-amino-acid chain; its full sequence is Aspartate carbamoyltransferase catalytic subunit (311 aa).

Residues arginine 55 and threonine 56 each coordinate carbamoyl phosphate. Lysine 85 serves as a coordination point for L-aspartate. Carbamoyl phosphate contacts are provided by arginine 106, histidine 135, and glutamine 138. L-aspartate is bound by residues arginine 168 and arginine 230. Leucine 268 and proline 269 together coordinate carbamoyl phosphate.

It belongs to the aspartate/ornithine carbamoyltransferase superfamily. ATCase family. Heterododecamer (2C3:3R2) of six catalytic PyrB chains organized as two trimers (C3), and six regulatory PyrI chains organized as three dimers (R2).

The catalysed reaction is carbamoyl phosphate + L-aspartate = N-carbamoyl-L-aspartate + phosphate + H(+). The protein operates within pyrimidine metabolism; UMP biosynthesis via de novo pathway; (S)-dihydroorotate from bicarbonate: step 2/3. In terms of biological role, catalyzes the condensation of carbamoyl phosphate and aspartate to form carbamoyl aspartate and inorganic phosphate, the committed step in the de novo pyrimidine nucleotide biosynthesis pathway. The sequence is that of Aspartate carbamoyltransferase catalytic subunit from Pectobacterium carotovorum subsp. carotovorum (strain PC1).